The chain runs to 447 residues: C4-dicarboxylate transport protein (447 aa).

Transmembrane regions (helical) follow at residues Ile19–Pro39, Leu55–Leu75, Ile90–Val110, Ala155–Leu175, Leu199–Ile219, Met232–Val252, Leu343–Ile363, and Ala366–Val386.

The protein belongs to the dicarboxylate/amino acid:cation symporter (DAACS) (TC 2.A.23) family.

The protein localises to the cell inner membrane. In terms of biological role, responsible for the transport of dicarboxylates such as succinate, fumarate, and malate from the periplasm across the membrane. The chain is C4-dicarboxylate transport protein from Rhodospirillum rubrum (strain ATCC 11170 / ATH 1.1.1 / DSM 467 / LMG 4362 / NCIMB 8255 / S1).